The primary structure comprises 156 residues: Bursicon (156 aa).

A signal peptide spans Met1–Ala26. Disulfide bonds link Cys37/Cys86, Cys51/Cys100, Cys61/Cys121, Cys65/Cys123, and Cys83/Cys126. The CTCK domain maps to Cys37–Gly127.

Heterodimer of burs and pburs.

Its subcellular location is the secreted. Final heterodimeric neurohormone released at the end of the molting cycle, involved in the sclerotization (tanning) of the insect cuticle, melanization and wing spreading. This Manduca sexta (Tobacco hawkmoth) protein is Bursicon.